Reading from the N-terminus, the 106-residue chain is Large ribosomal subunit protein uL24 (106 aa).

It belongs to the universal ribosomal protein uL24 family. As to quaternary structure, part of the 50S ribosomal subunit.

In terms of biological role, one of two assembly initiator proteins, it binds directly to the 5'-end of the 23S rRNA, where it nucleates assembly of the 50S subunit. Its function is as follows. One of the proteins that surrounds the polypeptide exit tunnel on the outside of the subunit. The chain is Large ribosomal subunit protein uL24 from Porphyromonas gingivalis (strain ATCC 33277 / DSM 20709 / CIP 103683 / JCM 12257 / NCTC 11834 / 2561).